Here is an 82-residue protein sequence, read N- to C-terminus: Small ribosomal subunit protein bS16 (82 aa).

It belongs to the bacterial ribosomal protein bS16 family.

This chain is Small ribosomal subunit protein bS16, found in Erwinia tasmaniensis (strain DSM 17950 / CFBP 7177 / CIP 109463 / NCPPB 4357 / Et1/99).